The following is a 288-amino-acid chain: Bifunctional protein FolD (288 aa).

Residues 166-168 (GAS) and isoleucine 232 contribute to the NADP(+) site.

This sequence belongs to the tetrahydrofolate dehydrogenase/cyclohydrolase family. As to quaternary structure, homodimer.

The catalysed reaction is (6R)-5,10-methylene-5,6,7,8-tetrahydrofolate + NADP(+) = (6R)-5,10-methenyltetrahydrofolate + NADPH. It catalyses the reaction (6R)-5,10-methenyltetrahydrofolate + H2O = (6R)-10-formyltetrahydrofolate + H(+). It functions in the pathway one-carbon metabolism; tetrahydrofolate interconversion. Functionally, catalyzes the oxidation of 5,10-methylenetetrahydrofolate to 5,10-methenyltetrahydrofolate and then the hydrolysis of 5,10-methenyltetrahydrofolate to 10-formyltetrahydrofolate. The chain is Bifunctional protein FolD from Escherichia coli O139:H28 (strain E24377A / ETEC).